The following is a 111-amino-acid chain: Ribosome-binding factor A (111 aa).

Belongs to the RbfA family. As to quaternary structure, monomer. Binds 30S ribosomal subunits, but not 50S ribosomal subunits or 70S ribosomes.

The protein localises to the cytoplasm. Functionally, one of several proteins that assist in the late maturation steps of the functional core of the 30S ribosomal subunit. Associates with free 30S ribosomal subunits (but not with 30S subunits that are part of 70S ribosomes or polysomes). Required for efficient processing of 16S rRNA. May interact with the 5'-terminal helix region of 16S rRNA. The chain is Ribosome-binding factor A from Helicobacter pylori (strain J99 / ATCC 700824) (Campylobacter pylori J99).